Consider the following 674-residue polypeptide: MRKILVTNALPYANGDLHLGHMLGYIQSDIWVRFQKLQGNQCIFVCGSDTHGTPIMLKAKSLGITPEELVTKYSNRHLQDFTDFEINFDNYHSTHNSLNKEIVEDIYNKLNNKNLISKKAIAQAYDPEAKMFLPDRFVKGTCPKCKAEDQYGDSCEVCGATYDPTELINPRSVISGQSPIQKNSEHFFFDLPALEKNIKDWIESNTLLQPEVANKLAEWFEQGLQSWDISRDAPYFGFAIPGTNEQKFFYVWLDAPMGYIASFKDYCNKNNINFGDFWGDSSSESELYHFIGKDIIYFHTLFWPAILSSTGYKTPTSVFANGFLTVNGKKMSKSRGTFIQARTYLDNLEPSYLRYYFASRLTSRIDDIDLNLEEFVTKSNSDIVGKVVNIASRCAGFIYKKFDATLSGEIFDPELESEFSKNHDAITQAFEKREFAHAVRLIMALADKANQFIDYHKPWQLAKEEGQEQKVHQVCSQGINMFKVLIVYLKPIIPSIVAEAERFLNIQFISWADAPKFLINHKIDKFKPLATRIEKEKVDKILEDTKKMLENEQAPQSKKEEPKLDIAAECTFDDFMKVDLRIAKITEASHVEGADKLLKLILDLGGVTKQVFAGIKSAYKPEDLIGKHTIMVANLAPRKMKFGMSEGMVLAAGDGKGIYILEPHEGAQPGMRVK.

A 'HIGH' region motif is present at residues 11 to 21 (PYANGDLHLGH). The Zn(2+) site is built by Cys-142, Cys-145, Cys-155, and Cys-158. A 'KMSKS' region motif is present at residues 330–334 (KMSKS). Lys-333 contributes to the ATP binding site. The tRNA-binding domain occupies 574–674 (DFMKVDLRIA…EGAQPGMRVK (101 aa)).

It belongs to the class-I aminoacyl-tRNA synthetase family. MetG type 1 subfamily. As to quaternary structure, homodimer. Requires Zn(2+) as cofactor.

The protein resides in the cytoplasm. The enzyme catalyses tRNA(Met) + L-methionine + ATP = L-methionyl-tRNA(Met) + AMP + diphosphate. Is required not only for elongation of protein synthesis but also for the initiation of all mRNA translation through initiator tRNA(fMet) aminoacylation. The protein is Methionine--tRNA ligase of Francisella tularensis subsp. tularensis (strain WY96-3418).